The primary structure comprises 889 residues: MLPAPAAPRWPPLLLLLLLLLPLARGAPARPAAGGQASELVVPTRLPGSAGELALHLSAFGKGFVLRLAPDDSFLAPEFKIERLGGSGRATGGERGLRGCFFSGTVNGEPESLAAVSLCRGLSGSFLLDGEEFTIQPQGAGGSLAQPHRLQRWGPAGARPLPRGPEWEVETGEGQRQERGDHQEDSEEESQEEEAEGASEPPPPLGATSRTKRFVSEARFVETLLVADASMAAFYGADLQNHILTLMSVAARIYKHPSIKNSINLMVVKVLIVEDEKWGPEVSDNGGLTLRNFCNWQRRFNQPSDRHPEHYDTAILLTRQNFCGQEGLCDTLGVADIGTICDPNKSCSVIEDEGLQAAHTLAHELGHVLSMPHDDSKPCTRLFGPMGKHHVMAPLFVHLNQTLPWSPCSAMYLTELLDGGHGDCLLDAPAAALPLPTGLPGRMALYQLDQQCRQIFGPDFRHCPNTSAQDVCAQLWCHTDGAEPLCHTKNGSLPWADGTPCGPGHLCSEGSCLPEEEVERPKPVADGGWAPWGPWGECSRTCGGGVQFSHRECKDPEPQNGGRYCLGRRAKYQSCHTEECPPDGKSFREQQCEKYNAYNYTDMDGNLLQWVPKYAGVSPRDRCKLFCRARGRSEFKVFEAKVIDGTLCGPETLAICVRGQCVKAGCDHVVDSPRKLDKCGVCGGKGNSCRKVSGSLTPTNYGYNDIVTIPAGATNIDVKQRSHPGVQNDGNYLALKTADGQYLLNGNLAISAIEQDILVKGTILKYSGSIATLERLQSFRPLPEPLTVQLLTVPGEVFPPKVKYTFFVPNDVDFSMQSSKERATTNIIQPLLHAQWVLGDWSECSSTCGAGWQRRTVECRDPSGQASATCNKALKPEDAKPCESQLCPL.

The first 26 residues, 1–26 (MLPAPAAPRWPPLLLLLLLLLPLARG), serve as a signal peptide directing secretion. A propeptide spanning residues 27 to 213 (APARPAAGGQ…PLGATSRTKR (187 aa)) is cleaved from the precursor. A disordered region spans residues 138 to 210 (QGAGGSLAQP…PPPPLGATSR (73 aa)). Residues 173-183 (EGQRQERGDHQ) show a composition bias toward basic and acidic residues. A compositionally biased stretch (acidic residues) spans 184 to 197 (EDSEEESQEEEAEG). The region spanning 219 to 429 (RFVETLLVAD…GHGDCLLDAP (211 aa)) is the Peptidase M12B domain. 11 disulfides stabilise this stretch: Cys-294–Cys-347, Cys-323–Cys-329, Cys-341–Cys-424, Cys-379–Cys-408, Cys-452–Cys-477, Cys-463–Cys-486, Cys-472–Cys-507, Cys-501–Cys-512, Cys-538–Cys-575, Cys-542–Cys-580, and Cys-553–Cys-565. The N-linked (GlcNAc...) asparagine glycan is linked to Asn-344. His-363 lines the Zn(2+) pocket. Residue Glu-364 is part of the active site. Positions 367 and 373 each coordinate Zn(2+). N-linked (GlcNAc...) asparagine glycosylation is found at Asn-400, Asn-465, and Asn-490. A Disintegrin domain is found at 438-525 (GLPGRMALYQ…EEVERPKPVA (88 aa)). Residues 526–581 (DGGWAPWGPWGECSRTCGGGVQFSHRECKDPEPQNGGRYCLGRRAKYQSCHTEECP) form the TSP type-1 1 domain. N-linked (GlcNAc...) asparagine glycosylation occurs at Asn-599. The segment at 690–831 (RKVSGSLTPT…RATTNIIQPL (142 aa)) is spacer. Positions 833-888 (HAQWVLGDWSECSSTCGAGWQRRTVECRDPSGQASATCNKALKPEDAKPCESQLCP) constitute a TSP type-1 2 domain.

It depends on Zn(2+) as a cofactor. In terms of processing, the precursor is cleaved by a furin endopeptidase. Post-translationally, glycosylated. Can be O-fucosylated by POFUT2 on a serine or a threonine residue found within the consensus sequence C1-X(2)-(S/T)-C2-G of the TSP type-1 repeat domains where C1 and C2 are the first and second cysteine residue of the repeat, respectively. Fucosylated repeats can then be further glycosylated by the addition of a beta-1,3-glucose residue by the glucosyltransferase, B3GALTL. Fucosylation mediates the efficient secretion of ADAMTS family members. Can also be C-glycosylated with one or two mannose molecules on tryptophan residues within the consensus sequence W-X-X-W of the TPRs, and N-glycosylated. These other glycosylations can also facilitate secretion. As to expression, highly expressed in adult and fetal lung, lower expression in brain, placenta, heart, stomach and fetal brain and kidney.

It localises to the secreted. It is found in the extracellular space. Its subcellular location is the extracellular matrix. Functionally, has anti-angiogenic properties. The protein is A disintegrin and metalloproteinase with thrombospondin motifs 8 (ADAMTS8) of Homo sapiens (Human).